Reading from the N-terminus, the 341-residue chain is HTH-type transcriptional repressor PurR (341 aa).

The HTH lacI-type domain maps to 2-56; sequence ATIKDVAKRANVSTTTVSHVINKTRFVAEETRNAVWAAIKELHYSPSAVARSLKV. The H-T-H motif DNA-binding region spans 4 to 23; that stretch reads IKDVAKRANVSTTTVSHVIN. A DNA-binding region spans residues 48 to 56; the sequence is SAVARSLKV. Residues Y73, R190, T192, F221, and D275 each coordinate hypoxanthine.

In terms of assembly, homodimer.

Its pathway is purine metabolism; purine nucleotide biosynthesis [regulation]. Its function is as follows. Is the main repressor of the genes involved in the de novo synthesis of purine nucleotides, regulating purB, purC, purEK, purF, purHD, purL, purMN and guaBA expression. In addition, it participates in the regulation or coregulation of genes involved in de novo pyrimidine nucleotide biosynthesis, salvage and uptake (pyrC, pyrD, carAB and codBA), and of several genes encoding enzymes necessary for nucleotide and polyamine biosynthesis (prsA, glyA, gcvTHP, speA, glnB). Binds to a 16-bp palindromic sequence located within the promoter region of pur regulon genes. The consensus binding sequence is 5'-ACGCAAACGTTTTCNT-3'. PurR is allosterically activated to bind its cognate DNA by binding the purine corepressors, hypoxanthine or guanine, thereby effecting transcription repression. This is HTH-type transcriptional repressor PurR (purR) from Escherichia coli (strain K12).